The primary structure comprises 216 residues: MKINQNTTVDCGNLILVPYQKCHVLKYHNWMKNEELQELTCSEPLTLDEEYQMQASWSTDEDKLTFIVLLNENDEAKKPSILDHVKAHSVESMIGDVNMFLTEEYADGIEEFDDSPSDANATNATKESEVHIVGELELMIAEPQNRRKGYGTKIVDAFLHYVESSGIAKNKQILKYRVKVGSQNKPSIRLFKKLGFSQVKYNAYFDHVELELMRTS.

Residues 68-215 enclose the N-acetyltransferase domain; sequence VLLNENDEAK…DHVELELMRT (148 aa).

Belongs to the acetyltransferase family. GNAT subfamily.

The protein localises to the cytoplasm. The protein resides in the nucleus. The protein is N-acetyltransferase 9-like protein of Schizosaccharomyces pombe (strain 972 / ATCC 24843) (Fission yeast).